A 359-amino-acid chain; its full sequence is Type II methyltransferase M.HinfI (359 aa).

In terms of domain architecture, RAMA spans 275–358 (KVPMKTLIEA…LDSLRYEYTN (84 aa)).

Belongs to the N(4)/N(6)-methyltransferase family.

The enzyme catalyses a 2'-deoxyadenosine in DNA + S-adenosyl-L-methionine = an N(6)-methyl-2'-deoxyadenosine in DNA + S-adenosyl-L-homocysteine + H(+). Functionally, a beta subtype methylase that recognizes the double-stranded sequence 5'-GANTC-3', methylates A-2 on both strands, and protects the DNA from cleavage by the HinfI endonuclease. This chain is Type II methyltransferase M.HinfI (hinfIM), found in Haemophilus influenzae.